Consider the following 334-residue polypeptide: Mevalonate kinase (334 aa).

An ATP-binding site is contributed by 110 to 120; the sequence is PVGAGLGSSAA. The Proton acceptor role is filled by D161.

It belongs to the GHMP kinase family. Mevalonate kinase subfamily. As to quaternary structure, homodimer. Mg(2+) serves as cofactor.

Its subcellular location is the cytoplasm. It carries out the reaction (R)-mevalonate + ATP = (R)-5-phosphomevalonate + ADP + H(+). It functions in the pathway isoprenoid biosynthesis; isopentenyl diphosphate biosynthesis via mevalonate pathway; isopentenyl diphosphate from (R)-mevalonate: step 1/3. Its function is as follows. Catalyzes the phosphorylation of (R)-mevalonate (MVA) to (R)-mevalonate 5-phosphate (MVAP). Functions in the mevalonate (MVA) pathway leading to isopentenyl diphosphate (IPP), a key precursor for the biosynthesis of isoprenoid compounds such as archaeal membrane lipids. This Thermococcus gammatolerans (strain DSM 15229 / JCM 11827 / EJ3) protein is Mevalonate kinase.